Reading from the N-terminus, the 346-residue chain is Ferredoxin--NADP reductase (346 aa).

Residues Glu-35, Gln-43, Tyr-48, Val-88, Phe-122, Asp-287, and Thr-327 each contribute to the FAD site.

Belongs to the ferredoxin--NADP reductase type 2 family. Homodimer. It depends on FAD as a cofactor.

The enzyme catalyses 2 reduced [2Fe-2S]-[ferredoxin] + NADP(+) + H(+) = 2 oxidized [2Fe-2S]-[ferredoxin] + NADPH. The sequence is that of Ferredoxin--NADP reductase from Oenococcus oeni (strain ATCC BAA-331 / PSU-1).